The sequence spans 354 residues: Thymidylate synthase (354 aa).

Residues 1–32 (MPAAGSEPSRPPSPPGVQEQSAEPRPPPPPHG) are disordered. Residue Arg-53 coordinates dUMP. Ser-117 carries the phosphoserine modification. 178–179 (RR) lines the dUMP pocket. Residue Cys-198 is the Nucleophile of the active site. DUMP-binding positions include 218–221 (RSGD), Asn-229, and 259–261 (HIY). Asp-221 contributes to the (6R)-5,10-methylene-5,6,7,8-tetrahydrofolate binding site. A Glycyl lysine isopeptide (Lys-Gly) (interchain with G-Cter in SUMO2) cross-link involves residue Lys-349. (6R)-5,10-methylene-5,6,7,8-tetrahydrofolate is bound at residue Ala-353.

It belongs to the thymidylate synthase family. In terms of assembly, homodimer.

The protein localises to the nucleus. It localises to the cytoplasm. It is found in the mitochondrion. The protein resides in the mitochondrion matrix. Its subcellular location is the mitochondrion inner membrane. The enzyme catalyses dUMP + (6R)-5,10-methylene-5,6,7,8-tetrahydrofolate = 7,8-dihydrofolate + dTMP. The protein operates within pyrimidine metabolism; dTTP biosynthesis. Functionally, catalyzes the reductive methylation of 2'-deoxyuridine 5'-monophosphate (dUMP) to thymidine 5'-monophosphate (dTMP), using the cosubstrate, 5,10- methylenetetrahydrofolate (CH2H4folate) as a 1-carbon donor and reductant and contributes to the de novo mitochondrial thymidylate biosynthesis pathway. The chain is Thymidylate synthase (TYMS) from Bos taurus (Bovine).